The primary structure comprises 377 residues: 3-(aryl)acrylate reductase (377 aa).

Residues 121–130 (FALTEPGAGS), 154–156 (FIT), arginine 266, glutamine 277, and 334–338 (QIHGG) contribute to the FAD site. Glutamate 361 functions as the Proton acceptor in the catalytic mechanism. 363–365 (TSE) contributes to the FAD binding site.

Belongs to the acyl-CoA dehydrogenase family. FAD is required as a cofactor.

The catalysed reaction is 3-phenylpropanoate + oxidized [electron-transfer flavoprotein] + H(+) = (E)-cinnamate + reduced [electron-transfer flavoprotein]. The enzyme catalyses phloretate + oxidized [electron-transfer flavoprotein] + H(+) = (E)-4-coumarate + reduced [electron-transfer flavoprotein]. It carries out the reaction indole-3-propanoate + oxidized [electron-transfer flavoprotein] + H(+) = (E)-3-(indol-3-yl)acrylate + reduced [electron-transfer flavoprotein]. It participates in amino-acid degradation. Functionally, essential for the reductive metabolism of L-phenylalanine, L-tyrosine and L-tryptophan. Catalyzes the reduction of phenylacrylic acid to phenylpropionic acid, 4-hydroxy-phenylacrylic acid to 4-hydroxy-phenylpropionic acid, and indoleacrylic acid to indolepropionic acid. This chain is 3-(aryl)acrylate reductase, found in Clostridium sporogenes (strain ATCC 15579).